A 284-amino-acid chain; its full sequence is Bifunctional protein FolD (284 aa).

NADP(+) is bound by residues G166–S168 and I232.

It belongs to the tetrahydrofolate dehydrogenase/cyclohydrolase family. Homodimer.

The catalysed reaction is (6R)-5,10-methylene-5,6,7,8-tetrahydrofolate + NADP(+) = (6R)-5,10-methenyltetrahydrofolate + NADPH. It catalyses the reaction (6R)-5,10-methenyltetrahydrofolate + H2O = (6R)-10-formyltetrahydrofolate + H(+). It functions in the pathway one-carbon metabolism; tetrahydrofolate interconversion. In terms of biological role, catalyzes the oxidation of 5,10-methylenetetrahydrofolate to 5,10-methenyltetrahydrofolate and then the hydrolysis of 5,10-methenyltetrahydrofolate to 10-formyltetrahydrofolate. The chain is Bifunctional protein FolD from Pseudomonas putida (strain W619).